An 806-amino-acid polypeptide reads, in one-letter code: Phenylalanine--tRNA ligase beta subunit (806 aa).

In terms of domain architecture, tRNA-binding spans 44-158; it reads ADGLSKLVVG…EEAVPGDAIF (115 aa). The B5 domain maps to 411–486; sequence TEPVEVSTSL…RIYGYDKLPT (76 aa). 4 residues coordinate Mg(2+): Asp-464, Asp-470, Glu-473, and Glu-474. Residues 713 to 806 form the FDX-ACB domain; that stretch reads TKFPAMTRDV…LTEQVGAEVR (94 aa).

Belongs to the phenylalanyl-tRNA synthetase beta subunit family. Type 1 subfamily. In terms of assembly, tetramer of two alpha and two beta subunits. The cofactor is Mg(2+).

Its subcellular location is the cytoplasm. It carries out the reaction tRNA(Phe) + L-phenylalanine + ATP = L-phenylalanyl-tRNA(Phe) + AMP + diphosphate + H(+). The protein is Phenylalanine--tRNA ligase beta subunit of Streptococcus pyogenes serotype M28 (strain MGAS6180).